Here is a 531-residue protein sequence, read N- to C-terminus: Squalene epoxidase 1 (531 aa).

Residues 9–29 traverse the membrane as a helical segment; it reads ILPLLISSLLISFVAFYGFFV. Residues 70-71, 90-91, Arg-98, Arg-169, Val-185, Asp-347, and Met-360 each bind FAD; these read VA and ER. The next 2 helical transmembrane spans lie at 458-478 and 483-503; these read LVCH…IPFP and IWLG…IIKA.

The protein belongs to the squalene monooxygenase family. It depends on FAD as a cofactor. Expressed in seedlings, leaves, stems, inflorescences, sepals, style and siliques. Expressed in expanded cotyledons, root tips and cortical cells of the root elongation zone, but not in root hair cells. In leaves, expressed in most cells, with a very strong expression in stomata.

The protein resides in the membrane. It carries out the reaction squalene + reduced [NADPH--hemoprotein reductase] + O2 = (S)-2,3-epoxysqualene + oxidized [NADPH--hemoprotein reductase] + H2O + H(+). The protein operates within terpene metabolism; lanosterol biosynthesis; lanosterol from farnesyl diphosphate: step 2/3. Catalyzes the stereospecific oxidation of squalene to (S)-2,3-epoxysqualene, and is considered to be a rate-limiting enzyme in steroid biosynthesis. Can produce not only oxidosqualene, but also 2,3:22,23-dioxidosqualene. Main squalene epoxidase in the root. Sqe1 mutants may show defects in membrane lipid rafts, impairing the correct localization of RHD2 NADPH oxidase and the proper polarized production of ROS. In Arabidopsis thaliana (Mouse-ear cress), this protein is Squalene epoxidase 1 (SQE1).